We begin with the raw amino-acid sequence, 203 residues long: Akirin-2 (203 aa).

2 positions are modified to phosphoserine: serine 18 and serine 21. The short motif at 22-27 (PKRRRC) is the Nuclear localization signal element. At serine 57 the chain carries Phosphoserine. The short motif at 200-203 (SYVS) is the SYVS motif element.

This sequence belongs to the akirin family. As to quaternary structure, homodimer. Interacts with IPO9; the interaction is direct. Associates (via SYVS motif) with 20S and 26S proteasomes. Interacts with SMARCD1; promoting SWI/SNF complex recruitment. Interacts with NFKBIZ. Interacts with YWHAB. In terms of processing, polyubiquitinated. Polyubiquitination is dependent of UBR5 that extends pre-ubiquitinated AKIRIN2. Widely expressed with the highest expression in peripheral blood leukocytes.

The protein resides in the nucleus. Its subcellular location is the cytoplasm. It is found in the membrane. Functionally, molecular adapter that acts as a bridge between a variety of multiprotein complexes, and which is involved in embryonic development, immunity, myogenesis and brain development. Plays a key role in nuclear protein degradation by promoting import of proteasomes into the nucleus: directly binds to fully assembled 20S proteasomes at one end and to nuclear import receptor IPO9 at the other end, bridging them together and mediating the import of pre-assembled proteasome complexes through the nuclear pore. Involved in innate immunity by regulating the production of interleukin-6 (IL6) downstream of Toll-like receptor (TLR): acts by bridging the NF-kappa-B inhibitor NFKBIZ and the SWI/SNF complex, leading to promote induction of IL6. Also involved in adaptive immunity by promoting B-cell activation. Involved in brain development: required for the survival and proliferation of cerebral cortical progenitor cells. Involved in myogenesis: required for skeletal muscle formation and skeletal development, possibly by regulating expression of muscle differentiation factors. Also plays a role in facilitating interdigital tissue regression during limb development. The sequence is that of Akirin-2 from Homo sapiens (Human).